We begin with the raw amino-acid sequence, 103 residues long: Large ribosomal subunit protein bL21 (103 aa).

Belongs to the bacterial ribosomal protein bL21 family. As to quaternary structure, part of the 50S ribosomal subunit. Contacts protein L20.

Functionally, this protein binds to 23S rRNA in the presence of protein L20. This is Large ribosomal subunit protein bL21 from Rhodococcus jostii (strain RHA1).